The following is a 342-amino-acid chain: (+)-pulegone reductase (342 aa).

Residues 163–166 (GSVG), lysine 189, tyrosine 205, asparagine 229, 251–257 (CGMVSQY), 281–283 (FVV), and asparagine 331 each bind NADP(+).

It belongs to the NADP-dependent oxidoreductase L4BD family.

The protein resides in the cytoplasm. It catalyses the reaction (2R,5R)-isomenthone + NADP(+) = (R)-pulegone + NADPH + H(+). The enzyme catalyses (1R,4S)-menthone + NADP(+) = (R)-pulegone + NADPH + H(+). Its pathway is secondary metabolite biosynthesis; terpenoid biosynthesis. Its activity is regulated as follows. Not inhibited by (+)-menthofuran. Functionally, monoterpene synthase that catalyzes the specific reduction of the 4,8-double bond of (+)-pulegone to produce both (-)-menthone and (+)-isomenthone in a 70:30 ratio. Unable to utilize either (-)-isopiperitenone or (+)-cis-isopulegone, or to catalyze the reverse reaction with (-)-menthone or (+)-isomenthone. Has an absolute requirement for NADPH. The polypeptide is (+)-pulegone reductase (Mentha piperita (Peppermint)).